A 450-amino-acid chain; its full sequence is Phosphoglucosamine mutase (450 aa).

Ser-101 acts as the Phosphoserine intermediate in catalysis. Residues Ser-101, Asp-240, Asp-242, and Asp-244 each contribute to the Mg(2+) site. A Phosphoserine modification is found at Ser-101.

The protein belongs to the phosphohexose mutase family. Mg(2+) is required as a cofactor. Activated by phosphorylation.

The enzyme catalyses alpha-D-glucosamine 1-phosphate = D-glucosamine 6-phosphate. In terms of biological role, catalyzes the conversion of glucosamine-6-phosphate to glucosamine-1-phosphate. This is Phosphoglucosamine mutase from Streptococcus sanguinis (strain SK36).